Reading from the N-terminus, the 347-residue chain is Glycerol-1-phosphate dehydrogenase [NAD(P)+] (347 aa).

NAD(+) contacts are provided by residues 90 to 94 and 112 to 115; these read GRPVD and TAIS. A substrate-binding site is contributed by Asp117. Residue Ser121 participates in NAD(+) binding. Substrate is bound at residue Asp165. Residues Asp165 and His245 each contribute to the Zn(2+) site. His249 provides a ligand contact to substrate. His262 contributes to the Zn(2+) binding site.

This sequence belongs to the glycerol-1-phosphate dehydrogenase family. As to quaternary structure, homodimer. Zn(2+) is required as a cofactor.

It is found in the cytoplasm. It catalyses the reaction sn-glycerol 1-phosphate + NAD(+) = dihydroxyacetone phosphate + NADH + H(+). The enzyme catalyses sn-glycerol 1-phosphate + NADP(+) = dihydroxyacetone phosphate + NADPH + H(+). The protein operates within membrane lipid metabolism; glycerophospholipid metabolism. In terms of biological role, catalyzes the NAD(P)H-dependent reduction of dihydroxyacetonephosphate (DHAP or glycerone phosphate) to glycerol 1-phosphate (G1P). The G1P thus generated is used as the glycerophosphate backbone of phospholipids in the cellular membranes of Archaea. The sequence is that of Glycerol-1-phosphate dehydrogenase [NAD(P)+] from Thermofilum pendens (strain DSM 2475 / Hrk 5).